Reading from the N-terminus, the 395-residue chain is Terminal nucleotidyltransferase 5B (395 aa).

This sequence belongs to the TENT family.

The protein resides in the cytoplasm. It is found in the nucleus. It carries out the reaction RNA(n) + ATP = RNA(n)-3'-adenine ribonucleotide + diphosphate. Catalyzes the transfer of one adenosine molecule from an ATP to an mRNA poly(A) tail bearing a 3'-OH terminal group in an ATP hydrolysis-dependent manner and participates in cytoplasmic polyadenylation. May be involved in maintaining the translation efficiency of at least some genes through preventing degradation of their mRNAs. This chain is Terminal nucleotidyltransferase 5B, found in Xenopus tropicalis (Western clawed frog).